The primary structure comprises 74 residues: High-potential iron-sulfur protein isozyme 2 (74 aa).

The [4Fe-4S] cluster site is built by Cys-36, Cys-39, Cys-53, and Cys-67.

Homodimer.

Specific class of high-redox-potential 4Fe-4S ferredoxins. Functions in anaerobic electron transport in most purple and in some other photosynthetic bacteria and in at least one genus (Paracoccus) of halophilic, denitrifying bacteria. This chain is High-potential iron-sulfur protein isozyme 2, found in Ectothiorhodospira mobilis.